We begin with the raw amino-acid sequence, 206 residues long: Urease accessory protein UreG (206 aa).

14 to 21 (GPVGSGKT) contacts GTP.

It belongs to the SIMIBI class G3E GTPase family. UreG subfamily. In terms of assembly, homodimer. UreD, UreF and UreG form a complex that acts as a GTP-hydrolysis-dependent molecular chaperone, activating the urease apoprotein by helping to assemble the nickel containing metallocenter of UreC. The UreE protein probably delivers the nickel.

The protein resides in the cytoplasm. Its function is as follows. Facilitates the functional incorporation of the urease nickel metallocenter. This process requires GTP hydrolysis, probably effectuated by UreG. The protein is Urease accessory protein UreG of Brucella anthropi (strain ATCC 49188 / DSM 6882 / CCUG 24695 / JCM 21032 / LMG 3331 / NBRC 15819 / NCTC 12168 / Alc 37) (Ochrobactrum anthropi).